The sequence spans 320 residues: L-lactate dehydrogenase (320 aa).

NAD(+) is bound by residues 15-16, Asp-37, Lys-42, Tyr-68, and 82-83; these read FV and GA. Residues Gln-85, Arg-91, and 123 to 126 each bind substrate; that span reads NPVD. NAD(+)-binding positions include 121-123 and Ser-146; that span reads ATN. Position 151–154 (151–154) interacts with substrate; the sequence is DSAR. Beta-D-fructose 1,6-bisphosphate-binding positions include Arg-156 and 168–172; that span reads QNVHA. Residue His-178 is the Proton acceptor of the active site. A Phosphotyrosine modification is found at Tyr-223. Thr-232 contacts substrate.

This sequence belongs to the LDH/MDH superfamily. LDH family. As to quaternary structure, homotetramer.

Its subcellular location is the cytoplasm. The enzyme catalyses (S)-lactate + NAD(+) = pyruvate + NADH + H(+). The protein operates within fermentation; pyruvate fermentation to lactate; (S)-lactate from pyruvate: step 1/1. With respect to regulation, allosterically activated by fructose 1,6-bisphosphate (FBP). Its function is as follows. Catalyzes the conversion of lactate to pyruvate. The protein is L-lactate dehydrogenase of Bacillus subtilis (strain 168).